The primary structure comprises 156 residues: Small ribosomal subunit protein uS7 (156 aa).

This sequence belongs to the universal ribosomal protein uS7 family. As to quaternary structure, part of the 30S ribosomal subunit. Contacts proteins S9 and S11.

One of the primary rRNA binding proteins, it binds directly to 16S rRNA where it nucleates assembly of the head domain of the 30S subunit. Is located at the subunit interface close to the decoding center, probably blocks exit of the E-site tRNA. This Ralstonia nicotianae (strain ATCC BAA-1114 / GMI1000) (Ralstonia solanacearum) protein is Small ribosomal subunit protein uS7.